A 318-amino-acid chain; its full sequence is NADH-ubiquinone oxidoreductase chain 1 (318 aa).

Helical transmembrane passes span 3–23 (MVNL…LTLI), 70–90 (MFII…IPLP), 100–120 (LAVL…LWSG), 146–166 (LAII…STLI), 171–191 (HTWL…STLA), 222–242 (LFFM…AILF), 253–273 (ELYT…FLWI), and 294–314 (LPLT…MAGI).

Belongs to the complex I subunit 1 family.

It is found in the mitochondrion inner membrane. It catalyses the reaction a ubiquinone + NADH + 5 H(+)(in) = a ubiquinol + NAD(+) + 4 H(+)(out). Functionally, core subunit of the mitochondrial membrane respiratory chain NADH dehydrogenase (Complex I) that is believed to belong to the minimal assembly required for catalysis. Complex I functions in the transfer of electrons from NADH to the respiratory chain. The immediate electron acceptor for the enzyme is believed to be ubiquinone. In Pteropus vampyrus (Large flying fox), this protein is NADH-ubiquinone oxidoreductase chain 1 (MT-ND1).